We begin with the raw amino-acid sequence, 634 residues long: Fluorothreonine transaldolase (634 aa).

Y67, H221, and H247 together coordinate pyridoxal 5'-phosphate. K248 carries the post-translational modification N6-(pyridoxal phosphate)lysine. A pyridoxal 5'-phosphate-binding site is contributed by R375. Residues 428 to 456 (TGDPASAAGPPARERYAPPTAPAGHPARP) form a disordered region.

The protein belongs to the SHMT family. Pyridoxal 5'-phosphate is required as a cofactor.

It catalyses the reaction fluoroacetaldehyde + L-threonine = 4-fluoro-L-threonine + acetaldehyde. In terms of biological role, transaldolase that catalyzes the final step in 4-fluorothreonine biosynthesis. Mediates a L-threonine/fluoroaceldehyde to 4-fluoro-L-threonine/acetaldehyde crossover reaction. Can also convert chloroacetaldehyde into 4-chloro-L-threonine. Does not use glycine as a substrate. This Streptantibioticus cattleyicolor (Streptomyces cattleya) protein is Fluorothreonine transaldolase.